A 140-amino-acid chain; its full sequence is uncharacterized protein (140 aa).

Asn-27 carries an N-linked (GlcNAc...) asparagine glycan. 3 helical membrane passes run 45 to 65, 76 to 96, and 116 to 136; these read FSLY…GVYA, VWIF…TGTV, and VPLC…YSMV.

This sequence belongs to the TMEM170 family.

It localises to the membrane. This is an uncharacterized protein from Saccharomyces cerevisiae (strain ATCC 204508 / S288c) (Baker's yeast).